The chain runs to 365 residues: 4-hydroxy-tetrahydrodipicolinate synthase 1, chloroplastic (365 aa).

Residues 1–39 (MSALKNYGLISIDSALHFPRSNQLQSYKRRNAKWVSPIA) constitute a chloroplast transit peptide. Threonine 108 provides a ligand contact to pyruvate. Tyrosine 194 serves as the catalytic Proton donor/acceptor. Catalysis depends on lysine 222, which acts as the Schiff-base intermediate with substrate. Residue isoleucine 261 coordinates pyruvate.

It belongs to the DapA family.

It localises to the plastid. Its subcellular location is the chloroplast. The catalysed reaction is L-aspartate 4-semialdehyde + pyruvate = (2S,4S)-4-hydroxy-2,3,4,5-tetrahydrodipicolinate + H2O + H(+). It functions in the pathway amino-acid biosynthesis; L-lysine biosynthesis via DAP pathway; (S)-tetrahydrodipicolinate from L-aspartate: step 3/4. Catalyzes the condensation of (S)-aspartate-beta-semialdehyde [(S)-ASA] and pyruvate to 4-hydroxy-tetrahydrodipicolinate (HTPA). In Arabidopsis thaliana (Mouse-ear cress), this protein is 4-hydroxy-tetrahydrodipicolinate synthase 1, chloroplastic (DHDPS1).